The following is a 314-amino-acid chain: Deoxyribonuclease-1-like 1 (314 aa).

The N-terminal stretch at 1–37 is a signal peptide; the sequence is MPFGQPGFLWRVPDAHIAMRGLVMAPLLILLVGGTEA. N-linked (GlcNAc...) asparagine glycosylation is present at Asn102. The active site involves Glu113. N-linked (GlcNAc...) asparagine glycosylation is present at Asn133. Residue His164 is part of the active site. A disulfide bond links Cys203 and Cys240. N-linked (GlcNAc...) asparagine glycosylation is present at Asn239.

It belongs to the DNase I family. Highly expressed in heart and skeletal muscles. Low expression in brain and thymus. Intermediated expression in other tissues.

It localises to the endoplasmic reticulum. This chain is Deoxyribonuclease-1-like 1 (Dnase1l1), found in Mus musculus (Mouse).